A 471-amino-acid polypeptide reads, in one-letter code: ATP synthase subunit beta 2 (471 aa).

157 to 164 (GGAGVGKT) contacts ATP.

Belongs to the ATPase alpha/beta chains family. F-type ATPases have 2 components, CF(1) - the catalytic core - and CF(0) - the membrane proton channel. CF(1) has five subunits: alpha(3), beta(3), gamma(1), delta(1), epsilon(1). CF(0) has three main subunits: a(1), b(2) and c(9-12). The alpha and beta chains form an alternating ring which encloses part of the gamma chain. CF(1) is attached to CF(0) by a central stalk formed by the gamma and epsilon chains, while a peripheral stalk is formed by the delta and b chains.

It localises to the cell inner membrane. The enzyme catalyses ATP + H2O + 4 H(+)(in) = ADP + phosphate + 5 H(+)(out). Functionally, produces ATP from ADP in the presence of a proton gradient across the membrane. The catalytic sites are hosted primarily by the beta subunits. This chain is ATP synthase subunit beta 2, found in Pelobacter propionicus (strain DSM 2379 / NBRC 103807 / OttBd1).